We begin with the raw amino-acid sequence, 103 residues long: CLAVATA3/ESR (CLE)-related protein 22 (103 aa).

Positions M1–A34 are cleaved as a signal peptide. The interval S37–R103 is disordered. Basic residues predominate over residues I41 to L50. Residues N66–T76 show a composition bias toward polar residues. Position 97 is a hydroxyproline (P97). Residue P97 is glycosylated (O-linked (Ara...) hydroxyproline).

This sequence belongs to the CLV3/ESR signal peptide family. The O-glycosylation (arabinosylation) of the hydroxyproline Pro-97 enhances binding affinity of the CLE22p peptide for its receptor. Mostly expressed in stems and apex, and, to a lower extent, in seedlings, leaves, flowers and siliques.

Its subcellular location is the secreted. It is found in the extracellular space. Functionally, extracellular signal peptide that regulates cell fate. Represses root apical meristem maintenance. This is CLAVATA3/ESR (CLE)-related protein 22 from Arabidopsis thaliana (Mouse-ear cress).